We begin with the raw amino-acid sequence, 665 residues long: MQDVKKRVEKLHDLLNQYSYEYYVQDNPSVPDSEYDKLLHELIEIEEKYPEFKSTDSPTVRVGGEAQSSFEKVNHDTPMLSLGNAFNEEDLRKFDQRIRDSIGKVEYMCELKIDGLAVSLKYENGRFVQGLTRGDGTTGEDITENLRTIHAIPLKIKEPLNFEVRGEAYMPRRSFIHLNNEKEQNGEQPFANPRNAAAGSLRQLDSKLAAKRKLSVFLYSVNDLTEFNATTQSEALEELDQLGFKTNQERERVSDIEGVLNYIEKWTSKRGSLSYDIDGIVIKVNDLSQQEEMGYTQKSPRWAIAYKFPAEEVITKLLDIELSIGRTGVVTPTAILEPVKVAGTTVSRASLHNEDLIHERDIRIGDSVVIKKAGDIIPEVVKSILDRRPNESEIYHMPTHCPSCGHELVRIEGEVALRCINPKCQAQLIEGLIHFVSRQAMNIDGLGTKIIHQLYENQLIKDVADIFYLKEEDLLPLERMGKKKVDNLLLAIEKSKEQSLEHLLFGLGIRHLGVKASQVLAERYETMDQLFKVTESELIEIQDIGDKLAQSVVTYLENSDIRSLIEKLSNKNVNMSYKGIKTTEIEGHPDFSGKTIVLTGKLEQMTRNEASEWLKMQGAKVTSSVTKSTDIVIAGADAGSKLAKAEKYGTEIWTEAAFIEKQNGI.

NAD(+) is bound by residues 32-36, 81-82, and Glu110; these read DSEYD and SL. Lys112 acts as the N6-AMP-lysine intermediate in catalysis. The NAD(+) site is built by Arg133, Glu167, Lys283, and Lys307. 4 residues coordinate Zn(2+): Cys401, Cys404, Cys419, and Cys424. The BRCT domain occupies 586–665; it reads EGHPDFSGKT…AAFIEKQNGI (80 aa).

This sequence belongs to the NAD-dependent DNA ligase family. LigA subfamily. Requires Mg(2+) as cofactor. Mn(2+) is required as a cofactor.

The enzyme catalyses NAD(+) + (deoxyribonucleotide)n-3'-hydroxyl + 5'-phospho-(deoxyribonucleotide)m = (deoxyribonucleotide)n+m + AMP + beta-nicotinamide D-nucleotide.. DNA ligase that catalyzes the formation of phosphodiester linkages between 5'-phosphoryl and 3'-hydroxyl groups in double-stranded DNA using NAD as a coenzyme and as the energy source for the reaction. It is essential for DNA replication and repair of damaged DNA. The protein is DNA ligase of Staphylococcus epidermidis (strain ATCC 12228 / FDA PCI 1200).